Reading from the N-terminus, the 185-residue chain is Protein OPG161 (185 aa).

Over M1–I33 the chain is Intravirion. The helical transmembrane segment at G34–I56 threads the bilayer. At V57–N185 the chain is on the virion surface side. The C-type lectin-like domain stretch occupies residues E98–N185. Residues N125 and N135 are each glycosylated (N-linked (GlcNAc...) asparagine; by host).

The protein belongs to the orthopoxvirus OPG161 family. Homodimer, disulfide-linked. Interacts with protein OPG190. Interacts (via C-terminus) with protein OPG164. Interacts with OPG162.

Its subcellular location is the virion membrane. The protein localises to the host membrane. Functionally, forms a complex with OPG162 and OPG190 to coordinate the incorporation of OPG164 into wrapped enveloped virion (EV) membranes and, subsequently, the production of actin tails. Therefore plays an essential role in efficient cell-to-cell spread of viral particles. The polypeptide is Protein OPG161 (OPG161) (Homo sapiens (Human)).